The following is a 355-amino-acid chain: tRNA-specific 2-thiouridylase MnmA (355 aa).

Residues 6–13 and Leu-33 contribute to the ATP site; that span reads LLSGGVDS. Cys-100 serves as the catalytic Nucleophile. An intrachain disulfide couples Cys-100 to Cys-195. Residue Gly-123 participates in ATP binding. The tract at residues 145-147 is interaction with tRNA; the sequence is KDQ. The active-site Cysteine persulfide intermediate is Cys-195.

The protein belongs to the MnmA/TRMU family.

The protein resides in the cytoplasm. The enzyme catalyses S-sulfanyl-L-cysteinyl-[protein] + uridine(34) in tRNA + AH2 + ATP = 2-thiouridine(34) in tRNA + L-cysteinyl-[protein] + A + AMP + diphosphate + H(+). Its function is as follows. Catalyzes the 2-thiolation of uridine at the wobble position (U34) of tRNA, leading to the formation of s(2)U34. This chain is tRNA-specific 2-thiouridylase MnmA, found in Borrelia garinii subsp. bavariensis (strain ATCC BAA-2496 / DSM 23469 / PBi) (Borreliella bavariensis).